Consider the following 306-residue polypeptide: Esterase tropF (306 aa).

Catalysis depends on charge relay system residues Ser-147, Asp-248, and His-276.

This sequence belongs to the LovG family.

It participates in secondary metabolite biosynthesis. Esterase; part of the gene cluster that mediates the biosynthesis of the tropolone class of fungal maleic anhydrides. The pathway begins with the synthesis of 3-methylorcinaldehyde by the non-reducing polyketide synthase (PKS) tropA. 3-methylorcinaldehyde is the substrate for the FAD-dependent monooxygenase tropB to yield a dearomatized hydroxycyclohexadione. The 2-oxoglutarate-dependent dioxygenase tropC then performs the oxidative ring expansion to provide the first tropolone metabolite stipitaldehyde. Trop D converts stipitaldehyde into stipitacetal which is in turn converted to stipitalide by the short-chain dehydrogenase/reductase tropE. The next steps involve tropF, tropG, tropH, tropI and tropJ to form successive tropolone maleic anhydrides including stipitaldehydic, stipitatonic and stipitatic acids. The sequence is that of Esterase tropF from Talaromyces stipitatus (strain ATCC 10500 / CBS 375.48 / QM 6759 / NRRL 1006) (Penicillium stipitatum).